The chain runs to 115 residues: NADH-ubiquinone oxidoreductase chain 3 (115 aa).

A run of 3 helical transmembrane segments spans residues 3-23 (LMLALLTNFTLATLLVIIAFW), 55-75 (FFLVAITFLLFDLEIALLLPL), and 84-104 (LNTMLTMALFLIILLAVSLAY).

It belongs to the complex I subunit 3 family. In terms of assembly, core subunit of respiratory chain NADH dehydrogenase (Complex I) which is composed of 45 different subunits. Interacts with TMEM186. Interacts with TMEM242.

It is found in the mitochondrion inner membrane. The enzyme catalyses a ubiquinone + NADH + 5 H(+)(in) = a ubiquinol + NAD(+) + 4 H(+)(out). Core subunit of the mitochondrial membrane respiratory chain NADH dehydrogenase (Complex I) which catalyzes electron transfer from NADH through the respiratory chain, using ubiquinone as an electron acceptor. Essential for the catalytic activity of complex I. In Bos indicus (Zebu), this protein is NADH-ubiquinone oxidoreductase chain 3.